Here is a 74-residue protein sequence, read N- to C-terminus: Peptide BmKa2 (74 aa).

The first 24 residues, 1 to 24, serve as a signal peptide directing secretion; the sequence is MSSKTLLVLLLVGVLVSTFFTADA.

This sequence belongs to the non-disulfide-bridged peptide (NDBP) superfamily. Long chain multifunctional peptide (group 2) family. In terms of tissue distribution, expressed by the venom gland.

The protein localises to the secreted. In terms of biological role, highly acidic peptide that may have antibacterial activity. This is Peptide BmKa2 from Olivierus martensii (Manchurian scorpion).